Consider the following 345-residue polypeptide: Methionine import ATP-binding protein MetN (345 aa).

Residues 2–241 (IKLNNIXKIF…PKTELAQEFI (240 aa)) form the ABC transporter domain. Residue 38 to 45 (GASGAGKS) participates in ATP binding.

This sequence belongs to the ABC transporter superfamily. Methionine importer (TC 3.A.1.24) family. As to quaternary structure, the complex is composed of two ATP-binding proteins (MetN), two transmembrane proteins (MetI) and a solute-binding protein (MetQ).

The protein localises to the cell inner membrane. The catalysed reaction is L-methionine(out) + ATP + H2O = L-methionine(in) + ADP + phosphate + H(+). It catalyses the reaction D-methionine(out) + ATP + H2O = D-methionine(in) + ADP + phosphate + H(+). Functionally, part of the ABC transporter complex MetNIQ involved in methionine import. Responsible for energy coupling to the transport system. This chain is Methionine import ATP-binding protein MetN, found in Haemophilus influenzae (strain ATCC 51907 / DSM 11121 / KW20 / Rd).